A 251-amino-acid chain; its full sequence is Long-distance movement protein (251 aa).

A disordered region spans residues 25-134; sequence SGKSCNSGGA…VAQPQQRWAK (110 aa). The short motif at 108 to 122 is the Nuclear localization signal element; the sequence is RPRRRAGRSGGMDPR. The Nuclear export signal motif lies at 149 to 153; the sequence is LPSLL.

As to quaternary structure, homooligomer. Interacts with host FIB2; this interaction, is required for ORF3 protein transiting through host Cajal body and nucleolus, relocalization of fibrillarin to the cytoplasm, and in presence of viral RNA, leads to the formation of stable RNPs.

The protein localises to the host cytoplasm. It is found in the host nucleus. The protein resides in the host nucleolus. In terms of biological role, protects and provides long-distance movement to viral RNA. Self associates and binds viral RNA and fibrillarin to form filamentous ribonucleoproteins (RNPs) protected from RNase. ORF3 protein actually fulfills functions that are usually provided by capsid protein, which is absent from umbraviruses' genome. This Clitoria (Hyacinth bean) protein is Long-distance movement protein (ORF3).